A 409-amino-acid polypeptide reads, in one-letter code: Cobalt-precorrin-5B C(1)-methyltransferase (409 aa).

This sequence belongs to the CbiD family.

It catalyses the reaction Co-precorrin-5B + S-adenosyl-L-methionine = Co-precorrin-6A + S-adenosyl-L-homocysteine. Its pathway is cofactor biosynthesis; adenosylcobalamin biosynthesis; cob(II)yrinate a,c-diamide from sirohydrochlorin (anaerobic route): step 6/10. In terms of biological role, catalyzes the methylation of C-1 in cobalt-precorrin-5B to form cobalt-precorrin-6A. The chain is Cobalt-precorrin-5B C(1)-methyltransferase from Methanopyrus kandleri (strain AV19 / DSM 6324 / JCM 9639 / NBRC 100938).